We begin with the raw amino-acid sequence, 107 residues long: Multidrug resistance protein mmr (107 aa).

The next 4 membrane-spanning stretches (helical) occupy residues threonine 2–leucine 19, leucine 29–serine 51, valine 58–glycine 80, and serine 84–alanine 106.

This sequence belongs to the drug/metabolite transporter (DMT) superfamily. Small multidrug resistance (SMR) (TC 2.A.7.1) family. Mmr subfamily.

The protein localises to the cell membrane. Functionally, multidrug efflux pump. Confers resistance to tetraphenylphosphonium (TPP), erythromycin, ethidium bromide, acriflavine, safranin O and pyronin Y. This is Multidrug resistance protein mmr (mmr) from Mycolicibacterium paratuberculosis (strain ATCC BAA-968 / K-10) (Mycobacterium paratuberculosis).